The sequence spans 186 residues: Ribosome-recycling factor (186 aa).

This sequence belongs to the RRF family.

It is found in the cytoplasm. Its function is as follows. Responsible for the release of ribosomes from messenger RNA at the termination of protein biosynthesis. May increase the efficiency of translation by recycling ribosomes from one round of translation to another. The protein is Ribosome-recycling factor of Polaromonas naphthalenivorans (strain CJ2).